A 73-amino-acid polypeptide reads, in one-letter code: Small ribosomal subunit protein bS18B (73 aa).

Belongs to the bacterial ribosomal protein bS18 family. In terms of assembly, part of the 30S ribosomal subunit. Forms a tight heterodimer with protein bS6.

Functionally, binds as a heterodimer with protein bS6 to the central domain of the 16S rRNA, where it helps stabilize the platform of the 30S subunit. This chain is Small ribosomal subunit protein bS18B, found in Frankia alni (strain DSM 45986 / CECT 9034 / ACN14a).